Consider the following 214-residue polypeptide: Large ribosomal subunit protein uL16-like (214 aa).

This sequence belongs to the universal ribosomal protein uL16 family. In terms of assembly, component of a male germ cell-specific 60S large ribosomal subunit (LSU), which contains RPL10L and RPL39L, instead of RPL10 and RPL39 paralogs. The composition of the rest of the complex is similar to classical ribosomes. Testis-specific.

The protein resides in the cytoplasm. Its function is as follows. Testis-specific component of the ribosome, which is required for the transition from prophase to metaphase in male meiosis I. Compensates for the inactivated X-linked RPL10 paralog during spermatogenesis. The ribosome is a large ribonucleoprotein complex responsible for the synthesis of proteins in the cell. The male germ cell-specific ribosome displays a ribosomal polypeptide exit tunnel of distinct size and charge states compared with the classical ribosome. It is responsible for regulating the biosynthesis and folding of a subset of male germ-cell-specific proteins that are essential for the formation of sperm. This Mus musculus (Mouse) protein is Large ribosomal subunit protein uL16-like.